Consider the following 252-residue polypeptide: Indole-3-glycerol phosphate synthase (252 aa).

It belongs to the TrpC family.

The enzyme catalyses 1-(2-carboxyphenylamino)-1-deoxy-D-ribulose 5-phosphate + H(+) = (1S,2R)-1-C-(indol-3-yl)glycerol 3-phosphate + CO2 + H2O. The protein operates within amino-acid biosynthesis; L-tryptophan biosynthesis; L-tryptophan from chorismate: step 4/5. This Listeria monocytogenes serotype 4b (strain CLIP80459) protein is Indole-3-glycerol phosphate synthase.